The following is a 227-amino-acid chain: ATP synthase F(0) complex subunit a (227 aa).

Transmembrane regions (helical) follow at residues 12-32 (PCLL…LLLP), 69-89 (WALL…LGLL), 98-118 (QLSM…LTGL), 139-159 (IPAL…ALGV), 170-190 (LLIQ…PSIS), and 196-216 (ILFL…YVFV).

It belongs to the ATPase A chain family. As to quaternary structure, component of the ATP synthase complex composed at least of ATP5F1A/subunit alpha, ATP5F1B/subunit beta, ATP5MC1/subunit c (homooctomer), MT-ATP6/subunit a, MT-ATP8/subunit 8, ATP5ME/subunit e, ATP5MF/subunit f, ATP5MG/subunit g, ATP5MK/subunit k, ATP5MJ/subunit j, ATP5F1C/subunit gamma, ATP5F1D/subunit delta, ATP5F1E/subunit epsilon, ATP5PF/subunit F6, ATP5PB/subunit b, ATP5PD/subunit d, ATP5PO/subunit OSCP. ATP synthase complex consists of a soluble F(1) head domain (subunits alpha(3) and beta(3)) - the catalytic core - and a membrane F(0) domain - the membrane proton channel (subunits c, a, 8, e, f, g, k and j). These two domains are linked by a central stalk (subunits gamma, delta, and epsilon) rotating inside the F1 region and a stationary peripheral stalk (subunits F6, b, d, and OSCP). Interacts with DNAJC30; interaction is direct.

Its subcellular location is the mitochondrion inner membrane. It carries out the reaction H(+)(in) = H(+)(out). Functionally, subunit a, of the mitochondrial membrane ATP synthase complex (F(1)F(0) ATP synthase or Complex V) that produces ATP from ADP in the presence of a proton gradient across the membrane which is generated by electron transport complexes of the respiratory chain. ATP synthase complex consist of a soluble F(1) head domain - the catalytic core - and a membrane F(1) domain - the membrane proton channel. These two domains are linked by a central stalk rotating inside the F(1) region and a stationary peripheral stalk. During catalysis, ATP synthesis in the catalytic domain of F(1) is coupled via a rotary mechanism of the central stalk subunits to proton translocation. With the subunit c (ATP5MC1), forms the proton-conducting channel in the F(0) domain, that contains two crucial half-channels (inlet and outlet) that facilitate proton movement from the mitochondrial intermembrane space (IMS) into the matrix. Protons are taken up via the inlet half-channel and released through the outlet half-channel, following a Grotthuss mechanism. The polypeptide is ATP synthase F(0) complex subunit a (Gallus gallus (Chicken)).